Consider the following 266-residue polypeptide: MNQYYFLSSFLSPQQPESPPLYLFQEINDLLSLNFTEQDWKSYVVLLRFFDLENFAFFWSGKPVPFSFGTVTNNNVETLLRLQMWSDEWEFEDFFKDFLLRYKTSQERLANFSELVRSFLDHYQSYPSEFLRTYFRFKQDLRIILAGFRARVMQKDVSFVLRDEDSSNPVVLHVLMQKDSPNYELPDEFFELKDVLGDYGRLPHMLNQTLSLYEFHKVEEMSRDKYFNADAILSRVTTYLMAIRNSYVSVQKGKELINLMEKGIKW.

It belongs to the chlamydial CPn_0087/CT3_09/TC_0583 family.

This is an uncharacterized protein from Chlamydia muridarum (strain MoPn / Nigg).